A 316-amino-acid polypeptide reads, in one-letter code: DNA-directed RNA polymerase subunit alpha (316 aa).

Residues Met1–Asp229 form an alpha N-terminal domain (alpha-NTD) region. An alpha C-terminal domain (alpha-CTD) region spans residues Lys246–Asp316.

This sequence belongs to the RNA polymerase alpha chain family. Homodimer. The RNAP catalytic core consists of 2 alpha, 1 beta, 1 beta' and 1 omega subunit. When a sigma factor is associated with the core the holoenzyme is formed, which can initiate transcription.

The catalysed reaction is RNA(n) + a ribonucleoside 5'-triphosphate = RNA(n+1) + diphosphate. Its function is as follows. DNA-dependent RNA polymerase catalyzes the transcription of DNA into RNA using the four ribonucleoside triphosphates as substrates. The protein is DNA-directed RNA polymerase subunit alpha of Syntrophomonas wolfei subsp. wolfei (strain DSM 2245B / Goettingen).